The sequence spans 105 residues: Iron-sulfur cluster assembly protein CyaY (105 aa).

Belongs to the frataxin family.

Functionally, involved in iron-sulfur (Fe-S) cluster assembly. May act as a regulator of Fe-S biogenesis. This chain is Iron-sulfur cluster assembly protein CyaY, found in Paraburkholderia xenovorans (strain LB400).